A 469-amino-acid polypeptide reads, in one-letter code: Dihydrolipoyl dehydrogenase (469 aa).

Residues 40-48, lysine 57, and alanine 120 contribute to the FAD site; that span reads EKAVLGGVC. Cysteine 48 and cysteine 53 are joined by a disulfide. NAD(+)-binding positions include 186–190, glutamate 209, and 275–278; these read GGGAI and AVGV. FAD is bound by residues aspartate 317 and alanine 325. The active-site Proton acceptor is histidine 450.

This sequence belongs to the class-I pyridine nucleotide-disulfide oxidoreductase family. As to quaternary structure, homodimer. It depends on FAD as a cofactor.

It is found in the cytoplasm. It catalyses the reaction N(6)-[(R)-dihydrolipoyl]-L-lysyl-[protein] + NAD(+) = N(6)-[(R)-lipoyl]-L-lysyl-[protein] + NADH + H(+). Functionally, lipoamide dehydrogenase is a component of the alpha-ketoacid dehydrogenase complexes. This Chlorobaculum tepidum (strain ATCC 49652 / DSM 12025 / NBRC 103806 / TLS) (Chlorobium tepidum) protein is Dihydrolipoyl dehydrogenase (lpd).